The primary structure comprises 268 residues: Tryptophan synthase alpha chain (268 aa).

Active-site proton acceptor residues include Glu-49 and Asp-60.

Belongs to the TrpA family. In terms of assembly, tetramer of two alpha and two beta chains.

It catalyses the reaction (1S,2R)-1-C-(indol-3-yl)glycerol 3-phosphate + L-serine = D-glyceraldehyde 3-phosphate + L-tryptophan + H2O. The protein operates within amino-acid biosynthesis; L-tryptophan biosynthesis; L-tryptophan from chorismate: step 5/5. In terms of biological role, the alpha subunit is responsible for the aldol cleavage of indoleglycerol phosphate to indole and glyceraldehyde 3-phosphate. In Escherichia coli (strain ATCC 8739 / DSM 1576 / NBRC 3972 / NCIMB 8545 / WDCM 00012 / Crooks), this protein is Tryptophan synthase alpha chain.